The sequence spans 370 residues: Dual-specificity RNA methyltransferase RlmN (370 aa).

Catalysis depends on E93, which acts as the Proton acceptor. A Radical SAM core domain is found at 99-337; that stretch reads EEGRGTLCVS…VTTVRKTRGD (239 aa). C106 and C343 are oxidised to a cystine. [4Fe-4S] cluster is bound by residues C113, C117, and C120. Residues 167–168, S199, 221–223, and N300 each bind S-adenosyl-L-methionine; these read GE and SLH. The active-site S-methylcysteine intermediate is the C343.

This sequence belongs to the radical SAM superfamily. RlmN family. [4Fe-4S] cluster serves as cofactor.

Its subcellular location is the cytoplasm. It carries out the reaction adenosine(2503) in 23S rRNA + 2 reduced [2Fe-2S]-[ferredoxin] + 2 S-adenosyl-L-methionine = 2-methyladenosine(2503) in 23S rRNA + 5'-deoxyadenosine + L-methionine + 2 oxidized [2Fe-2S]-[ferredoxin] + S-adenosyl-L-homocysteine. The catalysed reaction is adenosine(37) in tRNA + 2 reduced [2Fe-2S]-[ferredoxin] + 2 S-adenosyl-L-methionine = 2-methyladenosine(37) in tRNA + 5'-deoxyadenosine + L-methionine + 2 oxidized [2Fe-2S]-[ferredoxin] + S-adenosyl-L-homocysteine. Its function is as follows. Specifically methylates position 2 of adenine 2503 in 23S rRNA and position 2 of adenine 37 in tRNAs. m2A2503 modification seems to play a crucial role in the proofreading step occurring at the peptidyl transferase center and thus would serve to optimize ribosomal fidelity. This chain is Dual-specificity RNA methyltransferase RlmN, found in Francisella tularensis subsp. holarctica (strain LVS).